A 92-amino-acid chain; its full sequence is MTRSVWKGPFVDGYLLKKADAALASGRKDVIKTWSRRSTIMPQFVGLVFGVHNGQKHVPVSVSEDMVGMKFGEFAPTRNFPGHAADKKAKRK.

The protein belongs to the universal ribosomal protein uS19 family.

In terms of biological role, protein S19 forms a complex with S13 that binds strongly to the 16S ribosomal RNA. This is Small ribosomal subunit protein uS19 from Caulobacter sp. (strain K31).